The following is a 581-amino-acid chain: Threonine--tRNA ligase (581 aa).

The tract at residues 185-478 is catalytic; that stretch reads DHRKLGKELD…LVEHYGGAFP (294 aa). 3 residues coordinate Zn(2+): C278, H329, and H455.

It belongs to the class-II aminoacyl-tRNA synthetase family. Homodimer. Zn(2+) is required as a cofactor.

It localises to the cytoplasm. It carries out the reaction tRNA(Thr) + L-threonine + ATP = L-threonyl-tRNA(Thr) + AMP + diphosphate + H(+). Catalyzes the attachment of threonine to tRNA(Thr) in a two-step reaction: L-threonine is first activated by ATP to form Thr-AMP and then transferred to the acceptor end of tRNA(Thr). Also edits incorrectly charged L-seryl-tRNA(Thr). The polypeptide is Threonine--tRNA ligase (Borreliella burgdorferi (strain ATCC 35210 / DSM 4680 / CIP 102532 / B31) (Borrelia burgdorferi)).